A 407-amino-acid chain; its full sequence is MKYDHLLVRYGELTLKGSNRKKFVNQLRNNVNKSLKGLDGFVVKGKRDRMYIELEDHADINEITYRLSKIFGIKSISPVLKVEKTIEAMSAAAIKFAQQFEENSTFKIDVKRADKNFPMDTYELQRELGGAILKHFDNISVNVKRPDHEIRVEVRLDAIYMYEEVVPGSGGLPVGTGGKTLLMLSGGIDSPVAGMEVMRRGVTIEAIHFHSPPFTSDQAKEKVIELTRILAERVGPIKLHIVPFTELQKQVNKVVHPRYTMTSTRRMMMRVADKLVHQIGALAIVNGENLGQVASQTLHSMYAINNVTSTPVLRPLLTYDKEEIIIKSKEIGTFETSIQPFEDCCTIFTPKNPVTEPNFDKVVQYESVFDFEEMINRAVENIETLEITSDYKTIKEQQTNQLINDFL.

One can recognise a THUMP domain in the interval 61-165 (NEITYRLSKI…LDAIYMYEEV (105 aa)). ATP-binding positions include 183-184 (ML), 208-209 (HF), Arg265, Gly287, and Gln296.

It belongs to the ThiI family.

It is found in the cytoplasm. The enzyme catalyses [ThiI sulfur-carrier protein]-S-sulfanyl-L-cysteine + a uridine in tRNA + 2 reduced [2Fe-2S]-[ferredoxin] + ATP + H(+) = [ThiI sulfur-carrier protein]-L-cysteine + a 4-thiouridine in tRNA + 2 oxidized [2Fe-2S]-[ferredoxin] + AMP + diphosphate. The catalysed reaction is [ThiS sulfur-carrier protein]-C-terminal Gly-Gly-AMP + S-sulfanyl-L-cysteinyl-[cysteine desulfurase] + AH2 = [ThiS sulfur-carrier protein]-C-terminal-Gly-aminoethanethioate + L-cysteinyl-[cysteine desulfurase] + A + AMP + 2 H(+). The protein operates within cofactor biosynthesis; thiamine diphosphate biosynthesis. Its function is as follows. Catalyzes the ATP-dependent transfer of a sulfur to tRNA to produce 4-thiouridine in position 8 of tRNAs, which functions as a near-UV photosensor. Also catalyzes the transfer of sulfur to the sulfur carrier protein ThiS, forming ThiS-thiocarboxylate. This is a step in the synthesis of thiazole, in the thiamine biosynthesis pathway. The sulfur is donated as persulfide by IscS. In Staphylococcus aureus (strain MSSA476), this protein is Probable tRNA sulfurtransferase.